The chain runs to 494 residues: UDP-N-acetylmuramate--L-alanine ligase (494 aa).

122–128 serves as a coordination point for ATP; sequence GTHGKTT.

It belongs to the MurCDEF family.

It is found in the cytoplasm. The enzyme catalyses UDP-N-acetyl-alpha-D-muramate + L-alanine + ATP = UDP-N-acetyl-alpha-D-muramoyl-L-alanine + ADP + phosphate + H(+). It functions in the pathway cell wall biogenesis; peptidoglycan biosynthesis. Functionally, cell wall formation. The chain is UDP-N-acetylmuramate--L-alanine ligase from Mycobacterium bovis (strain ATCC BAA-935 / AF2122/97).